The sequence spans 693 residues: Ion-translocating oxidoreductase complex subunit C (693 aa).

4Fe-4S ferredoxin-type domains lie at 368 to 397 and 407 to 436; these read MEPV…QQLY and KARD…VQYY. Residues cysteine 377, cysteine 380, cysteine 383, cysteine 387, cysteine 416, cysteine 419, cysteine 422, and cysteine 426 each contribute to the [4Fe-4S] cluster site. Residues 539-548 show a composition bias toward basic and acidic residues; the sequence is REERVREKQS. The interval 539–564 is disordered; it reads REERVREKQSQQETPATEVTPEELDP.

Belongs to the 4Fe4S bacterial-type ferredoxin family. RnfC subfamily. The complex is composed of six subunits: RnfA, RnfB, RnfC, RnfD, RnfE and RnfG. Requires [4Fe-4S] cluster as cofactor.

Its subcellular location is the cell inner membrane. Part of a membrane-bound complex that couples electron transfer with translocation of ions across the membrane. This is Ion-translocating oxidoreductase complex subunit C from Pectobacterium atrosepticum (strain SCRI 1043 / ATCC BAA-672) (Erwinia carotovora subsp. atroseptica).